The sequence spans 556 residues: Arginine--tRNA ligase (556 aa).

The 'HIGH' region signature appears at 132–142 (ANPTGDLHLGH).

It belongs to the class-I aminoacyl-tRNA synthetase family. Monomer.

It localises to the cytoplasm. The catalysed reaction is tRNA(Arg) + L-arginine + ATP = L-arginyl-tRNA(Arg) + AMP + diphosphate. The sequence is that of Arginine--tRNA ligase from Listeria monocytogenes serotype 4b (strain F2365).